A 220-amino-acid polypeptide reads, in one-letter code: 5'(3')-deoxyribonucleotidase, mitochondrial (220 aa).

Residues 1 to 23 (MHRLRGCCARPRGAPLRAERSRA) constitute a mitochondrion transit peptide. Residue aspartate 33 is the Nucleophile of the active site. Aspartate 33 and aspartate 35 together coordinate Mg(2+). The Proton donor role is filled by aspartate 35. The substrate site is built by aspartate 35, phenylalanine 41, phenylalanine 67, tryptophan 68, valine 69, tryptophan 88, threonine 122, and lysine 157. Aspartate 168 contacts Mg(2+).

This sequence belongs to the 5'(3')-deoxyribonucleotidase family. In terms of assembly, homodimer. Requires Mg(2+) as cofactor.

The protein resides in the mitochondrion. Dephosphorylates specifically the 5' and 2'(3')-phosphates of uracil and thymine deoxyribonucleotides, and so protects mitochondrial DNA replication from excess dTTP. Has only marginal activity towards dIMP and dGMP. This is 5'(3')-deoxyribonucleotidase, mitochondrial (Nt5m) from Mus musculus (Mouse).